A 104-amino-acid chain; its full sequence is uncharacterized protein (104 aa).

Residues 77–98 form a helical membrane-spanning segment; it reads IAAVRANIIICACFFYLFCYCS.

It localises to the membrane. This is an uncharacterized protein from Saccharomyces cerevisiae (strain ATCC 204508 / S288c) (Baker's yeast).